The following is a 175-amino-acid chain: DDB1- and CUL4-associated factor 16 (175 aa).

Residues 1–42 form a disordered region; the sequence is MGPRNPSPDPLSESESEEEENTNYLNESSGEEWDSSEEEDPV. Acidic residues-rich tracts occupy residues 12-21 and 29-41; these read SESESEEEEN and SGEE…EEDP. Lysine 61 is modified (N6-acetyllysine).

In terms of assembly, interacts with DDB1 and CUL4A.

The protein resides in the nucleus. Its pathway is protein modification; protein ubiquitination. Functionally, functions as a substrate recognition component for CUL4-DDB1 E3 ubiquitin-protein ligase complex, which mediates ubiquitination and proteasome-dependent degradation of nuclear proteins. The protein is DDB1- and CUL4-associated factor 16 (DCAF16) of Bos taurus (Bovine).